The chain runs to 265 residues: AHGGVYAHPGVPIGSHPPGHGMATSPAVSQAMDGASLSLDASAKSSENSDRGLLAMSLGNGSADNIEGGADHGNSQSGDTEDSTDGSDTNGAGVSERSKKRSRETTPDNSGDSKSHLRRCQPTGEINDDSEKAIVAVRPGKVGEKVMGTVLSPSMTTTLEMRNPASTHLKASPTNVSQLSPALPNEAWLQNERELKREKRKQSNRESARRSRLRKQAEAEELAIRVQSLTAENMTLKSEINKLMENSEKLKLENAALMERLKMNS.

Disordered regions lie at residues 1–133 (AHGG…SEKA) and 167–218 (THLK…KQAE). The segment covering 35 to 46 (ASLSLDASAKSS) has biased composition (low complexity). Composition is skewed to basic and acidic residues over residues 103-115 (RETTPDNSGDSKS) and 191-209 (NERELKREKRKQSNRESAR). Residues 194 to 257 (ELKREKRKQS…EKLKLENAAL (64 aa)) enclose the bZIP domain. The tract at residues 196 to 215 (KREKRKQSNRESARRSRLRK) is basic motif. The leucine-zipper stretch occupies residues 222 to 257 (LAIRVQSLTAENMTLKSEINKLMENSEKLKLENAAL).

It belongs to the bZIP family. As to expression, present mainly in roots. Barely detectable in stems and leaves.

It is found in the nucleus. Functionally, trans-activator of a beta-glucuronidase (GUS) reporter gene. Binds to a G-box-related element, (5'-GCAACGTGGC-3'). Also binds to the HEX-motif of wheat histone H3 promoter. The protein is Transcriptional activator TAF-1 (TAF1) of Nicotiana tabacum (Common tobacco).